The chain runs to 84 residues: Small ribosomal subunit protein eS27 (84 aa).

A compositionally biased stretch (basic and acidic residues) spans 1 to 16 (MPLAKDLLHPTPEEEK). A disordered region spans residues 1-23 (MPLAKDLLHPTPEEEKRKHKKKR). The C4-type zinc-finger motif lies at 37–59 (CPGCYKITTVFSHAQTVVLCVGC).

The protein belongs to the eukaryotic ribosomal protein eS27 family. In terms of assembly, component of the small ribosomal subunit. Part of the small subunit (SSU) processome, composed of more than 70 proteins and the RNA chaperone small nucleolar RNA (snoRNA) U3. Zn(2+) is required as a cofactor.

It localises to the cytoplasm. The protein localises to the nucleus. It is found in the nucleolus. In terms of biological role, component of the small ribosomal subunit. The ribosome is a large ribonucleoprotein complex responsible for the synthesis of proteins in the cell. Required for proper rRNA processing and maturation of 18S rRNAs. Part of the small subunit (SSU) processome, first precursor of the small eukaryotic ribosomal subunit. During the assembly of the SSU processome in the nucleolus, many ribosome biogenesis factors, an RNA chaperone and ribosomal proteins associate with the nascent pre-rRNA and work in concert to generate RNA folding, modifications, rearrangements and cleavage as well as targeted degradation of pre-ribosomal RNA by the RNA exosome. This chain is Small ribosomal subunit protein eS27 (rps27), found in Xenopus laevis (African clawed frog).